The sequence spans 338 residues: Anthranilate phosphoribosyltransferase (338 aa).

5-phospho-alpha-D-ribose 1-diphosphate is bound by residues G81, 84-85 (GD), S89, 91-94 (NVST), 109-117 (KHGNRALSS), and A121. Residue G81 coordinates anthranilate. Residue S93 coordinates Mg(2+). N112 contributes to the anthranilate binding site. R167 serves as a coordination point for anthranilate. Residues D226 and E227 each contribute to the Mg(2+) site.

This sequence belongs to the anthranilate phosphoribosyltransferase family. Homodimer. Requires Mg(2+) as cofactor.

The enzyme catalyses N-(5-phospho-beta-D-ribosyl)anthranilate + diphosphate = 5-phospho-alpha-D-ribose 1-diphosphate + anthranilate. It participates in amino-acid biosynthesis; L-tryptophan biosynthesis; L-tryptophan from chorismate: step 2/5. Functionally, catalyzes the transfer of the phosphoribosyl group of 5-phosphorylribose-1-pyrophosphate (PRPP) to anthranilate to yield N-(5'-phosphoribosyl)-anthranilate (PRA). This is Anthranilate phosphoribosyltransferase from Rhodopseudomonas palustris (strain BisB5).